The primary structure comprises 664 residues: Gametogenetin-binding protein 2 (664 aa).

Disordered stretches follow at residues 375-425 (QEKK…NTSE) and 447-476 (KKGLTPHSNVSDCGYSSSLEGSEPGSQEGS). Basic residues predominate over residues 376–388 (EKKRQKKNRRKNK). The span at 452–475 (PHSNVSDCGYSSSLEGSEPGSQEG) shows a compositional bias: polar residues.

The protein resides in the cytoplasm. Its function is as follows. May be involved in spermatogenesis. The sequence is that of Gametogenetin-binding protein 2 (ggnbp2) from Xenopus laevis (African clawed frog).